The following is a 434-amino-acid chain: MKTIIKNAKVITMNEARTIHEHGYVVIEDGVFTAIEHGEPAEEAAKGANVVNADKKWLMPGLINTHGHTGMSLFRGVSDDLPLSKWLAEHIWPLEQKLDQKAVEAARLLSMVEMIESGTTTFLEMYHLHLDDFAAAVEEAGMRATLMRSVIGLCSKEEQEEKLAESLGFARRWHKQANGRIQTMLAPHAPYTCPPDYIERIVEAARQEGLPVHMHLAETRKEIHDYMDEYGMHPVELLQERDLLSGTEWLFAHGVHMHEQHYELLGAHQAAVSHNPKSNLKLGSGIAQVASMQKHGIVVSLGTDSVASNNALDLFEEMRTAVLLQRGINEQADIVTTWEGLNMATSNGAKALRFANLGTIEVGQQADFIMLNPEQAHLHPSSQAVSHLVFAAKGSDVTDVYVQGAPLMKDKQLLTLDKERILKEANEQLRRLQQ.

Zn(2+) is bound by residues histidine 66 and histidine 68. Residues glutamate 95, arginine 148, and histidine 188 each contribute to the substrate site. Position 215 (histidine 215) interacts with Zn(2+). Substrate contacts are provided by glutamate 218 and aspartate 304. Aspartate 304 contacts Zn(2+).

Belongs to the metallo-dependent hydrolases superfamily. MTA/SAH deaminase family. Zn(2+) is required as a cofactor.

It catalyses the reaction S-adenosyl-L-homocysteine + H2O + H(+) = S-inosyl-L-homocysteine + NH4(+). The enzyme catalyses S-methyl-5'-thioadenosine + H2O + H(+) = S-methyl-5'-thioinosine + NH4(+). Catalyzes the deamination of 5-methylthioadenosine and S-adenosyl-L-homocysteine into 5-methylthioinosine and S-inosyl-L-homocysteine, respectively. Is also able to deaminate adenosine. The sequence is that of 5-methylthioadenosine/S-adenosylhomocysteine deaminase from Shouchella clausii (strain KSM-K16) (Alkalihalobacillus clausii).